Consider the following 263-residue polypeptide: Ribonuclease 3 (263 aa).

A disordered region spans residues 1-23 (MPHSKNQRKHRHHSHSERRRQPK). Positions 35-164 (FDELLRTLNL…FVGALYLDQG (130 aa)) constitute an RNase III domain. E77 contributes to the Mg(2+) binding site. D81 is an active-site residue. Positions 150 and 153 each coordinate Mg(2+). Residue E153 is part of the active site. In terms of domain architecture, DRBM spans 190-259 (DFKSQLQEFI…AQQALITLSQ (70 aa)).

The protein belongs to the ribonuclease III family. Homodimer. Requires Mg(2+) as cofactor.

The protein localises to the cytoplasm. The enzyme catalyses Endonucleolytic cleavage to 5'-phosphomonoester.. Functionally, digests double-stranded RNA. Involved in the processing of primary rRNA transcript to yield the immediate precursors to the large and small rRNAs (23S and 16S). Processes some mRNAs, and tRNAs when they are encoded in the rRNA operon. Processes pre-crRNA and tracrRNA of type II CRISPR loci if present in the organism. This is Ribonuclease 3 from Halalkalibacterium halodurans (strain ATCC BAA-125 / DSM 18197 / FERM 7344 / JCM 9153 / C-125) (Bacillus halodurans).